The chain runs to 432 residues: Adenosine 3'-phospho 5'-phosphosulfate transporter 1 (432 aa).

9 helical membrane-spanning segments follow: residues 5–25 (WWAV…ETPE), 40–60 (VVNA…VQYF), 109–129 (ALKL…WGVL), 154–174 (FLVL…CVLC), 238–258 (WEYL…LSSG), 265–285 (PATT…DSFT), 299–319 (SVQM…GSLL), 353–373 (LFIF…IMTL), and 387–407 (GHTV…ALLL). Phosphoserine is present on Ser-427.

The protein belongs to the nucleotide-sugar transporter family. SLC35B subfamily.

The protein resides in the golgi apparatus membrane. The catalysed reaction is 3'-phosphoadenylyl sulfate(in) + adenosine 3',5'-bisphosphate(out) = 3'-phosphoadenylyl sulfate(out) + adenosine 3',5'-bisphosphate(in). Its function is as follows. Probably functions as a 3'-phosphoadenylyl sulfate:adenosine 3',5'-bisphosphate antiporter at the Golgi membranes. Mediates the transport from the cytosol into the lumen of the Golgi of 3'-phosphoadenylyl sulfate/adenosine 3'-phospho 5'-phosphosulfate (PAPS), a universal sulfuryl donor for sulfation events that take place in that compartment. The sequence is that of Adenosine 3'-phospho 5'-phosphosulfate transporter 1 from Pongo abelii (Sumatran orangutan).